The following is a 513-amino-acid chain: ATP synthase subunit alpha (513 aa).

169 to 176 is an ATP binding site; sequence GDRQCGKT.

It belongs to the ATPase alpha/beta chains family. As to quaternary structure, F-type ATPases have 2 components, CF(1) - the catalytic core - and CF(0) - the membrane proton channel. CF(1) has five subunits: alpha(3), beta(3), gamma(1), delta(1), epsilon(1). CF(0) has three main subunits: a(1), b(2) and c(9-12). The alpha and beta chains form an alternating ring which encloses part of the gamma chain. CF(1) is attached to CF(0) by a central stalk formed by the gamma and epsilon chains, while a peripheral stalk is formed by the delta and b chains.

Its subcellular location is the cell inner membrane. It catalyses the reaction ATP + H2O + 4 H(+)(in) = ADP + phosphate + 5 H(+)(out). In terms of biological role, produces ATP from ADP in the presence of a proton gradient across the membrane. The alpha chain is a regulatory subunit. In Burkholderia orbicola (strain AU 1054), this protein is ATP synthase subunit alpha.